Here is a 110-residue protein sequence, read N- to C-terminus: UPF0102 protein HH_1751 (110 aa).

The protein belongs to the UPF0102 family.

The chain is UPF0102 protein HH_1751 from Helicobacter hepaticus (strain ATCC 51449 / 3B1).